Consider the following 784-residue polypeptide: Ribosome biogenesis protein BOP1 homolog (784 aa).

A compositionally biased stretch (basic residues) spans 1–11 (MTKKLALKRKG). The tract at residues 1–159 (MTKKLALKRK…DSDTSDEEDI (159 aa)) is disordered. Composition is skewed to acidic residues over residues 27–36 (SENEEEEEDL), 45–54 (EDSTDDEGID), 62–73 (SEELQFESDEEG), and 84–111 (AEED…EDEE). Over residues 112–123 (KDSKSKQADDKP) the composition is skewed to basic and acidic residues. A compositionally biased stretch (low complexity) spans 124-133 (SSSGAASKKA). The segment covering 138–148 (LSKRDTSKPEY) has biased composition (basic and acidic residues). Residues 149–158 (QDSDTSDEED) are compositionally biased toward acidic residues. WD repeat units follow at residues 445-486 (GHTD…RTIE), 488-526 (DEVV…KVLV), 570-612 (THFK…SQIP), 615-653 (KSKG…LVKK), 656-695 (TNSK…KPYQ), 699-738 (LHRN…DLLQ), and 754-784 (RDEF…RLYT).

The protein belongs to the WD repeat BOP1/ERB1 family.

Its subcellular location is the nucleus. It localises to the nucleolus. It is found in the nucleoplasm. Its function is as follows. Required for maturation of ribosomal RNAs and formation of the large ribosomal subunit. The polypeptide is Ribosome biogenesis protein BOP1 homolog (Drosophila yakuba (Fruit fly)).